Consider the following 663-residue polypeptide: DNA ligase (663 aa).

NAD(+)-binding positions include 33 to 37 (DYSYD), 82 to 83 (SI), and Glu-112. The N6-AMP-lysine intermediate role is filled by Lys-114. NAD(+) contacts are provided by Arg-135, Glu-171, Lys-285, and Lys-309. 4 residues coordinate Zn(2+): Cys-403, Cys-406, Cys-419, and Cys-424. The 83-residue stretch at 581–663 (DKEAPLQGKV…LRILDAKSVS (83 aa)) folds into the BRCT domain.

This sequence belongs to the NAD-dependent DNA ligase family. LigA subfamily. It depends on Mg(2+) as a cofactor. The cofactor is Mn(2+).

The catalysed reaction is NAD(+) + (deoxyribonucleotide)n-3'-hydroxyl + 5'-phospho-(deoxyribonucleotide)m = (deoxyribonucleotide)n+m + AMP + beta-nicotinamide D-nucleotide.. Functionally, DNA ligase that catalyzes the formation of phosphodiester linkages between 5'-phosphoryl and 3'-hydroxyl groups in double-stranded DNA using NAD as a coenzyme and as the energy source for the reaction. It is essential for DNA replication and repair of damaged DNA. The sequence is that of DNA ligase from Chlamydia trachomatis serovar D (strain ATCC VR-885 / DSM 19411 / UW-3/Cx).